The chain runs to 467 residues: Abscisic acid 8'-hydroxylase 1 (467 aa).

The helical transmembrane segment at 5–24 threads the bilayer; the sequence is ALFLTLFAGSLFLYFLRCLI. Position 411 (Cys-411) interacts with heme.

Belongs to the cytochrome P450 family. The cofactor is heme. Mainly expressed in flowers, siliques, roots and stems. Lower expression in rosette leaves and dry seeds. Expressed in vascular tissues of embryo during the seed development.

Its subcellular location is the membrane. The catalysed reaction is 2-cis-(+)-abscisate + reduced [NADPH--hemoprotein reductase] + O2 = (+)-8'-hydroxyabscisate + oxidized [NADPH--hemoprotein reductase] + H2O + H(+). The protein operates within plant hormone degradation; abscisic acid degradation. Functionally, involved in the oxidative degradation of abscisic acid. Plays an important role in determining abscisic acid levels in dry seeds and in the control of postgermination growth. In Arabidopsis thaliana (Mouse-ear cress), this protein is Abscisic acid 8'-hydroxylase 1 (CYP707A1).